We begin with the raw amino-acid sequence, 428 residues long: Spliceosome RNA helicase DDX39B (428 aa).

The span at 1 to 19 (MAENDVDNELLDYEDDEVE) shows a compositional bias: acidic residues. The segment at 1–31 (MAENDVDNELLDYEDDEVETAAGGDGAEAPA) is disordered. A2 carries the post-translational modification N-acetylalanine. At K36 the chain carries N6-acetyllysine; alternate. K36 participates in a covalent cross-link: Glycyl lysine isopeptide (Lys-Gly) (interchain with G-Cter in SUMO2); alternate. A phosphoserine mark is found at S38 and S41. Positions 45–73 (SGFRDFLLKPELLRAIVDCGFEHPSEVQH) match the Q motif motif. The Helicase ATP-binding domain occupies 76–249 (IPQAILGMDV…RKFMQDPMEI (174 aa)). ATP is bound at residue 89–96 (AKSGMGKT). Position 172 is a phosphothreonine (T172). The DECD box signature appears at 196–199 (DECD). The 162-residue stretch at 261 to 422 (GLQQYYVKLK…ELPDEIDISS (162 aa)) folds into the Helicase C-terminal domain.

This sequence belongs to the DEAD box helicase family. DECD subfamily. As to quaternary structure, homodimer, and heterodimer with DDX39A. DDX39B interacts with the THO subcomplex to form the THO-DDX39B complex which multimerizes into a 28-subunit tetrameric assembly. Component of the transcription/export (TREX) complex at least composed of ALYREF/THOC4, DDX39B, SARNP/CIP29, CHTOP and the THO subcomplex; in the complex interacts with THOC2. THOC1-THOC2-THOC3-DDX39B subcomplex is sufficient for the interaction with export factor NXF1-NXT1. TREX seems to have a dynamic structure involving ATP-dependent remodeling. Within the TREX complex bridges ALYREF/THOC4 and the THO subcomplex, and, in a ATP-dependent manner, ALYREF/THOC4 and SARNP/CIP29. Component of the spliceosome. Interacts directly with U2AF2. Interacts with RBM8A, RNPS1 and SRRM1, FYTTD1/UIF, THOC1, MX1 and POLDIP3. Interacts with LUZP4. Interacts with SARNP/CIP29 (via the C-terminal domain); the interaction is direct and facilitates RNA binding of DDX39B. In terms of assembly, (Microbial infection) Interacts with human cytomegalovirus/HHV-5 protein UL69.

Its subcellular location is the nucleus. The protein resides in the nucleus speckle. It localises to the cytoplasm. It carries out the reaction ATP + H2O = ADP + phosphate + H(+). Functionally, involved in nuclear export of spliced and unspliced mRNA. Component of the TREX complex which is thought to couple mRNA transcription, processing and nuclear export, and specifically associates with spliced mRNA and not with unspliced pre-mRNA. The TREX complex is recruited to spliced mRNAs by a transcription-independent mechanism, binds to mRNA upstream of the exon-junction complex (EJC) and is recruited in a splicing- and cap-dependent manner to a region near the 5' end of the mRNA where it functions in mRNA export to the cytoplasm via the TAP/NXF1 pathway. The THOC1-THOC2-THOC3 core complex alone is sufficient to promote ATPase activity of DDX39B; in the complex THOC2 is the only component that directly interacts with DDX39B. Associates with SARNP/CIP29, which facilitates RNA binding of DDX39B and likely plays a role in mRNA export. May undergo several rounds of ATP hydrolysis during assembly of TREX to drive subsequent loading of components such as ALYREF/THOC4 and CHTOP onto mRNA. Also associates with pre-mRNA independent of ALYREF/THOC4. Involved in the nuclear export of intronless mRNA; the ATP-bound form is proposed to recruit export adapter ALYREF/THOC4 to intronless mRNA; its ATPase activity is cooperatively stimulated by RNA and ALYREF/THOC4 and ATP hydrolysis is thought to trigger the dissociation from RNA to allow the association of ALYREF/THOC4 and the NXF1-NXT1 heterodimer. Involved in transcription elongation and genome stability. Its function is as follows. Splice factor that is required for the first ATP-dependent step in spliceosome assembly and for the interaction of U2 snRNP with the branchpoint. Has both RNA-stimulated ATP binding/hydrolysis activity and ATP-dependent RNA unwinding activity. Even with the stimulation of RNA, the ATPase activity is weak. Can only hydrolyze ATP but not other NTPs. The RNA stimulation of ATPase activity does not have a strong preference for the sequence and length of the RNA. However, ssRNA stimulates the ATPase activity much more strongly than dsRNA. Can unwind 5' or 3' overhangs or blunt end RNA duplexes in vitro. The ATPase and helicase activities are not influenced by U2AF2; the effect of ALYREF/THOC4 is reported conflictingly with [PubMed:23299939] reporting a stimulatory effect. (Microbial infection) The TREX complex is essential for the export of Kaposi's sarcoma-associated herpesvirus (KSHV) intronless mRNAs and infectious virus production. This is Spliceosome RNA helicase DDX39B from Homo sapiens (Human).